Consider the following 263-residue polypeptide: ATP synthase subunit b 2 (263 aa).

Residues 2-22 (LIDPLTVVAQIINFLILVALL) form a helical membrane-spanning segment.

It belongs to the ATPase B chain family. F-type ATPases have 2 components, F(1) - the catalytic core - and F(0) - the membrane proton channel. F(1) has five subunits: alpha(3), beta(3), gamma(1), delta(1), epsilon(1). F(0) has four main subunits: a(1), b(1), b'(1) and c(10-14). The alpha and beta chains form an alternating ring which encloses part of the gamma chain. F(1) is attached to F(0) by a central stalk formed by the gamma and epsilon chains, while a peripheral stalk is formed by the delta, b and b' chains.

It is found in the cellular thylakoid membrane. Functionally, f(1)F(0) ATP synthase produces ATP from ADP in the presence of a proton or sodium gradient. F-type ATPases consist of two structural domains, F(1) containing the extramembraneous catalytic core and F(0) containing the membrane proton channel, linked together by a central stalk and a peripheral stalk. During catalysis, ATP synthesis in the catalytic domain of F(1) is coupled via a rotary mechanism of the central stalk subunits to proton translocation. Its function is as follows. Component of the F(0) channel, it forms part of the peripheral stalk, linking F(1) to F(0). This chain is ATP synthase subunit b 2, found in Acaryochloris marina (strain MBIC 11017).